The sequence spans 684 residues: U4/U6 small nuclear ribonucleoprotein Prp3 (684 aa).

Residues 1 to 87 enclose the PWI domain; that stretch reads MSLSKRELDE…HSKSNSDRNR (87 aa). Basic and acidic residues predominate over residues 73 to 107; that stretch reads GRSSRHSKSNSDRNRKRELKDVFGDDSEVSKESSG. Disordered regions lie at residues 73–109 and 162–183; these read GRSSRHSKSNSDRNRKRELKDVFGDDSEVSKESSGVK and FISPPTPQPKISSSSQSERLPI. The segment covering 170 to 183 has biased composition (polar residues); it reads PKISSSSQSERLPI.

As to quaternary structure, component of the precatalytic spliceosome (spliceosome B complex). Component of the U4/U6-U5 tri-snRNP complex, a building block of the precatalytic spliceosome (spliceosome B complex). The U4/U6-U5 tri-snRNP complex is composed of the U4, U6 and U5 snRNAs and at least PRPF3, PRPF4, PRPF6, PRPF8, PRPF31, SNRNP200, TXNL4A, SNRNP40, SNRPB, SNRPD1, SNRPD2, SNRPD3, SNRPE, SNRPF, SNRPG, DDX23, CD2BP2, PPIH, SNU13, EFTUD2, SART1 and USP39, plus LSM2, LSM3, LSM4, LSM5, LSM6, LSM7 and LSM8.

The protein localises to the nucleus. Its subcellular location is the nucleus speckle. Its function is as follows. Plays a role in pre-mRNA splicing as component of the U4/U6-U5 tri-snRNP complex that is involved in spliceosome assembly, and as component of the precatalytic spliceosome (spliceosome B complex). The chain is U4/U6 small nuclear ribonucleoprotein Prp3 (PRPF3) from Gallus gallus (Chicken).